We begin with the raw amino-acid sequence, 624 residues long: Cell pattern formation-associated protein ust1 (624 aa).

Disordered regions lie at residues 1–24 and 43–99; these read MSTA…APTG and RSGS…GHSS. A compositionally biased stretch (low complexity) spans 43–62; that stretch reads RSGSVPASASGSAPGSASGS. A compositionally biased stretch (basic residues) spans 70–85; that stretch reads QHHTGHHHYSAHHTHS. An HTH APSES-type domain is found at 233 to 339; that stretch reads RVTTTLWEDE…PNIQSFLYHP (107 aa). A DNA-binding region (H-T-H motif) is located at residues 267–288; that stretch reads GTKLLNVCGMSRGKRDGILKNE. Residues 352-362 are compositionally biased toward low complexity; it reads AQERQAQRQRA. Disordered regions lie at residues 352 to 456, 474 to 504, and 538 to 624; these read AQER…QQQQ, QQAY…LNNS, and SWND…IHHE. The segment covering 369–391 has biased composition (polar residues); it reads PGANGTSQAPPLMRANTTPSNGD. Residues 392–426 show a composition bias toward low complexity; it reads TSTFSSGLSSLGSWTGSHDQGHASAPTTAQPSPSS. The span at 427-451 shows a compositional bias: polar residues; it reads MHNGATQMHMSLSNHGTASPTYAQS. Residues 571 to 587 are compositionally biased toward basic and acidic residues; the sequence is LDGDDLHSPDSSDDRLA. Positions 615–624 are enriched in gly residues; the sequence is VGNGSGIHHE.

The protein belongs to the EFG1/PHD1/stuA family. In terms of processing, phosphorylated but is not a target of cAMP signaling.

The protein resides in the nucleus. Its function is as follows. Transcription factor that regulates asexual reproduction. Binds the StuA-response elements (StRE) with the consensus sequence 5'-(A/T)CGCG(T/A)N(A/C)-3' at the promoters of target genes. Regulates dimorphism, virulence, and the sporulation program. Required for mating, gall induction, and sporogenesis in maize tissue. Regulates expression of the filament-down-regulated gene UM00205 and the teliospore-specific gene ssp1. The polypeptide is Cell pattern formation-associated protein ust1 (ust1) (Mycosarcoma maydis (Corn smut fungus)).